Consider the following 524-residue polypeptide: Mitochondrial-processing peptidase subunit alpha (524 aa).

A mitochondrion-targeting transit peptide spans 1-32 (MATAVWAAARLLRGSAALCARPKFGSPAHRRF). Lys-63 is subject to N6-succinyllysine.

This sequence belongs to the peptidase M16 family. As to quaternary structure, heterodimer of PMPCA (alpha) and PMPCB (beta) subunits, forming the mitochondrial processing protease (MPP) in which PMPCA is involved in substrate recognition and binding and PMPCB is the catalytic subunit.

It localises to the mitochondrion matrix. The protein resides in the mitochondrion inner membrane. Substrate recognition and binding subunit of the essential mitochondrial processing protease (MPP), which cleaves the mitochondrial sequence off newly imported precursors proteins. The polypeptide is Mitochondrial-processing peptidase subunit alpha (Pmpca) (Rattus norvegicus (Rat)).